We begin with the raw amino-acid sequence, 371 residues long: Probable L-aspartate decarboxylase (371 aa).

Residue Lys232 is modified to N6-(pyridoxal phosphate)lysine.

This sequence belongs to the group II decarboxylase family. MfnA subfamily. The cofactor is pyridoxal 5'-phosphate.

The catalysed reaction is L-aspartate + H(+) = beta-alanine + CO2. Its pathway is cofactor biosynthesis; coenzyme A biosynthesis. Functionally, catalyzes the decarboxylation of L-aspartate to produce beta-alanine. This chain is Probable L-aspartate decarboxylase, found in Pyrococcus furiosus (strain ATCC 43587 / DSM 3638 / JCM 8422 / Vc1).